The chain runs to 435 residues: Glutamyl-tRNA reductase (435 aa).

Substrate is bound by residues 50 to 53 (TCNR), serine 110, 115 to 117 (ESQ), and glutamine 121. Cysteine 51 functions as the Nucleophile in the catalytic mechanism. 191 to 196 (GAGDMG) lines the NADP(+) pocket.

This sequence belongs to the glutamyl-tRNA reductase family. In terms of assembly, homodimer.

It carries out the reaction (S)-4-amino-5-oxopentanoate + tRNA(Glu) + NADP(+) = L-glutamyl-tRNA(Glu) + NADPH + H(+). It functions in the pathway porphyrin-containing compound metabolism; protoporphyrin-IX biosynthesis; 5-aminolevulinate from L-glutamyl-tRNA(Glu): step 1/2. Catalyzes the NADPH-dependent reduction of glutamyl-tRNA(Glu) to glutamate 1-semialdehyde (GSA). This Sulfurovum sp. (strain NBC37-1) protein is Glutamyl-tRNA reductase.